Here is a 99-residue protein sequence, read N- to C-terminus: Large ribosomal subunit protein bL27 (99 aa).

Residues 1-9 constitute a propeptide that is removed on maturation; the sequence is MLIMNLQLF.

The protein belongs to the bacterial ribosomal protein bL27 family. In terms of processing, the N-terminus is cleaved by ribosomal processing cysteine protease Prp.

This is Large ribosomal subunit protein bL27 from Clostridium botulinum (strain Alaska E43 / Type E3).